The primary structure comprises 261 residues: RNA-binding protein 1 (261 aa).

Disordered stretches follow at residues 1–38 (MADGYWNRQQSLLPHSGLHKRPRPDYEMPASGLPSGNE) and 232–261 (QFSRYPGPRSGGGPRSSGPPRGGHGSRGRR). Positions 151 to 236 (PTLYIEGLPS…SHLRLQFSRY (86 aa)) constitute an RRM domain. Gly residues predominate over residues 240–254 (RSGGGPRSSGPPRGG).

In terms of tissue distribution, ubiquitous.

The protein localises to the nucleus speckle. Its subcellular location is the cytoplasmic granule. Functionally, RNA-binding protein interacting with the enod40 RNA. This is RNA-binding protein 1 from Medicago truncatula (Barrel medic).